Consider the following 669-residue polypeptide: Collagen alpha-1(II) chain (669 aa).

4-hydroxyproline occurs at positions 3 and 12. Residues 318–327 (XXXXXXXGAP) are compositionally biased toward low complexity. Disordered regions lie at residues 318 to 360 (XXXX…XXXX), 405 to 438 (XXXX…XXXX), and 638 to 669 (XXGF…AGPR). Pro-336 and Pro-345 each carry 4-hydroxyproline. Low complexity-rich tracts occupy residues 339–360 (AGFA…XXXX) and 405–420 (XXXX…NGNP). A 3-hydroxyproline modification is found at Pro-413. 4-hydroxyproline is present on residues Pro-414, Pro-420, and Pro-426. Composition is skewed to low complexity over residues 429-438 (AGKXXXXXXX) and 638-647 (XXGFTGLQGL). A 4-hydroxyproline modification is found at Pro-648. A 3-hydroxyproline modification is found at Pro-650.

The protein belongs to the fibrillar collagen family. In terms of assembly, homotrimers of alpha 1(II) chains. In terms of processing, contains mostly 4-hydroxyproline. Prolines at the third position of the tripeptide repeating unit (G-X-P) are 4-hydroxylated in some or all of the chains. Contains 3-hydroxyproline at a few sites. This modification occurs on the first proline residue in the sequence motif Gly-Pro-Hyp, where Hyp is 4-hydroxyproline.

It is found in the secreted. Its subcellular location is the extracellular space. The protein localises to the extracellular matrix. Type II collagen is specific for cartilaginous tissues. It is essential for the normal embryonic development of the skeleton, for linear growth and for the ability of cartilage to resist compressive forces. The polypeptide is Collagen alpha-1(II) chain (Mammut americanum (American mastodon)).